The sequence spans 382 residues: MKITHITTYRLPPRWMFLKIETDEGVVGWGEPVIESRARTVEAAVHEFADYLIGKDPARINDLWQVMYRAGFYRGGPIMMSAIAGIDQALWDIKGKVLNAPVWQLMGGLVRDKIKAYSWVGGDRPADVIDGIEKLRGIGFDTFKLNGCEEMGVIDNSRAVDAAVNTVAQIREAFGSEIEFGLDFHGRVSAPMAKVLIKELEPYRPLFIEEPVLAEQAEYYPRLAAQTHIPIAAGERMFSRFEFKRVLDAGGLAILQPDLSHAGGITECYKIAGMAEAYDVALAPHCPLGPIALAACLHIDFVSRNAVFQEQSMGIHYNKGAELLDFVKNKEDFSMDGGFFKPLTKPGLGVDIDEARVIELSKSAPDWRNPLWRHADGSVAEW.

Residue aspartate 183 coordinates Mg(2+). Histidine 185 functions as the Proton donor in the catalytic mechanism. Residues glutamate 209 and glutamate 235 each contribute to the Mg(2+) site. The active-site Proton acceptor is histidine 285.

It belongs to the mandelate racemase/muconate lactonizing enzyme family. GalD subfamily. The cofactor is Mg(2+).

The catalysed reaction is D-galactonate = 2-dehydro-3-deoxy-D-galactonate + H2O. The protein operates within carbohydrate acid metabolism; D-galactonate degradation; D-glyceraldehyde 3-phosphate and pyruvate from D-galactonate: step 1/3. Functionally, catalyzes the dehydration of D-galactonate to 2-keto-3-deoxy-D-galactonate. The polypeptide is D-galactonate dehydratase (Salmonella choleraesuis (strain SC-B67)).